The following is a 114-amino-acid chain: Flagellar hook-basal body complex protein FliE (114 aa).

This sequence belongs to the FliE family.

It is found in the bacterial flagellum basal body. The chain is Flagellar hook-basal body complex protein FliE from Burkholderia vietnamiensis (strain G4 / LMG 22486) (Burkholderia cepacia (strain R1808)).